Consider the following 1173-residue polypeptide: Pleckstrin homology domain-containing family A member 6 (1173 aa).

A compositionally biased stretch (polar residues) spans 1-22 (MSNKTGGKRSATINSDIANHNM). Residues 1-39 (MSNKTGGKRSATINSDIANHNMVSEVPPERPNIRATRTS) are disordered. Residues 59–158 (PVTKAGWLYK…WIQAMGEAAR (100 aa)) form the PH domain. The interval 163 to 346 (PAQKSVPQPV…PSRFYPMPRR (184 aa)) is disordered. Residues 201–233 (LEPEAKTRGEGDGRGCEKAERRPERPEVKKETL) are compositionally biased toward basic and acidic residues. Phosphoserine is present on residues serine 247 and serine 251. Composition is skewed to polar residues over residues 270–281 (NGWQYSSPSRPG) and 311–322 (RKSSMNQLQQWV). Phosphoserine occurs at positions 314, 459, 461, and 472. Tyrosine 492 carries the post-translational modification Phosphotyrosine. Phosphoserine is present on serine 665. Disordered stretches follow at residues 737-872 (RKNN…PRDI) and 888-984 (ALNK…RPAY). Composition is skewed to low complexity over residues 761 to 782 (SSNS…SPFS) and 789 to 799 (GSPTKPGSSEE). The segment covering 815–824 (ESPPTVPPLP) has biased composition (pro residues). Serine 864 carries the post-translational modification Phosphoserine. Threonine 868 carries the post-translational modification Phosphothreonine. Residue serine 901 is modified to Phosphoserine. Phosphothreonine is present on threonine 908. A compositionally biased stretch (polar residues) spans 915 to 926 (RTTNGLTNGLSS). The residue at position 925 (serine 925) is a Phosphoserine. The span at 940-952 (GKVKMSVEEQMDR) shows a compositional bias: basic and acidic residues. Over residues 953-967 (MRRHQSGSMKEKRRS) the composition is skewed to basic residues. A phosphoserine mark is found at serine 973, serine 979, and serine 992. The residue at position 1045 (threonine 1045) is a Phosphothreonine. At serine 1065 the chain carries Phosphoserine. Disordered regions lie at residues 1093 to 1114 (PIGE…QEQE) and 1130 to 1173 (RGRM…TMRV). Threonine 1140 is subject to Phosphothreonine. Residues 1141–1155 (PSPPTSPASPTPPVN) are compositionally biased toward pro residues. Residue serine 1142 is modified to Phosphoserine. Threonine 1145 is subject to Phosphothreonine. A phosphoserine mark is found at serine 1146 and serine 1149. At threonine 1151 the chain carries Phosphothreonine.

The protein is Pleckstrin homology domain-containing family A member 6 (Plekha6) of Mus musculus (Mouse).